The primary structure comprises 325 residues: NADH-quinone oxidoreductase subunit H (325 aa).

Transmembrane regions (helical) follow at residues 5 to 25 (LIIILIKSAVVILLLFTAAAY), 75 to 95 (FVYWLAPGISLFTALFIFVLI), 117 to 137 (VGVVFLLAFSSLAVYGVVLAG), 157 to 177 (ISYEIPMGLSLLTVVLSTGTL), 190 to 210 (WLIWTNPISFIIYFITSFAET), 240 to 260 (FFLGEYINILAVSAIATTLFF), 268 to 288 (DIPILWFGLKVAIFVFIFMWV), and 305 to 325 (WKVLIPIAILNLIITAYFTLV).

This sequence belongs to the complex I subunit 1 family. As to quaternary structure, NDH-1 is composed of 14 different subunits. Subunits NuoA, H, J, K, L, M, N constitute the membrane sector of the complex.

The protein resides in the cell inner membrane. The catalysed reaction is a quinone + NADH + 5 H(+)(in) = a quinol + NAD(+) + 4 H(+)(out). NDH-1 shuttles electrons from NADH, via FMN and iron-sulfur (Fe-S) centers, to quinones in the respiratory chain. The immediate electron acceptor for the enzyme in this species is believed to be ubiquinone. Couples the redox reaction to proton translocation (for every two electrons transferred, four hydrogen ions are translocated across the cytoplasmic membrane), and thus conserves the redox energy in a proton gradient. This subunit may bind ubiquinone. The protein is NADH-quinone oxidoreductase subunit H of Protochlamydia amoebophila (strain UWE25).